A 284-amino-acid polypeptide reads, in one-letter code: Pantothenate synthetase (284 aa).

Position 30-37 (30-37 (MGNLHDGH)) interacts with ATP. Histidine 37 (proton donor) is an active-site residue. Glutamine 61 contacts (R)-pantoate. Glutamine 61 serves as a coordination point for beta-alanine. Residue 149 to 152 (GEKD) participates in ATP binding. Glutamine 155 is a binding site for (R)-pantoate. Residues valine 178 and 186–189 (LSSR) each bind ATP.

This sequence belongs to the pantothenate synthetase family. Homodimer.

It localises to the cytoplasm. It catalyses the reaction (R)-pantoate + beta-alanine + ATP = (R)-pantothenate + AMP + diphosphate + H(+). Its pathway is cofactor biosynthesis; (R)-pantothenate biosynthesis; (R)-pantothenate from (R)-pantoate and beta-alanine: step 1/1. Catalyzes the condensation of pantoate with beta-alanine in an ATP-dependent reaction via a pantoyl-adenylate intermediate. This is Pantothenate synthetase from Cronobacter sakazakii (strain ATCC BAA-894) (Enterobacter sakazakii).